The chain runs to 521 residues: Bifunctional purine biosynthesis protein PurH (521 aa).

The region spanning 1–147 (MGEITRALIS…KNWEGVTVLV (147 aa)) is the MGS-like domain.

Belongs to the PurH family.

The enzyme catalyses (6R)-10-formyltetrahydrofolate + 5-amino-1-(5-phospho-beta-D-ribosyl)imidazole-4-carboxamide = 5-formamido-1-(5-phospho-D-ribosyl)imidazole-4-carboxamide + (6S)-5,6,7,8-tetrahydrofolate. It catalyses the reaction IMP + H2O = 5-formamido-1-(5-phospho-D-ribosyl)imidazole-4-carboxamide. Its pathway is purine metabolism; IMP biosynthesis via de novo pathway; 5-formamido-1-(5-phospho-D-ribosyl)imidazole-4-carboxamide from 5-amino-1-(5-phospho-D-ribosyl)imidazole-4-carboxamide (10-formyl THF route): step 1/1. The protein operates within purine metabolism; IMP biosynthesis via de novo pathway; IMP from 5-formamido-1-(5-phospho-D-ribosyl)imidazole-4-carboxamide: step 1/1. This chain is Bifunctional purine biosynthesis protein PurH, found in Acidithiobacillus ferrooxidans (strain ATCC 53993 / BNL-5-31) (Leptospirillum ferrooxidans (ATCC 53993)).